We begin with the raw amino-acid sequence, 210 residues long: Transmembrane protein 61 (210 aa).

Transmembrane regions (helical) follow at residues 18-38 (YCMT…FAWW) and 69-89 (VSFV…LWSV). The segment at 140–172 (VAEGPPTPPAYPTEEALEPSGSRDALLSTQPAW) is disordered.

The protein resides in the membrane. The polypeptide is Transmembrane protein 61 (TMEM61) (Homo sapiens (Human)).